A 141-amino-acid chain; its full sequence is U-scoloptoxin(17)-Er3a (141 aa).

The signal sequence occupies residues 1-21; that stretch reads MKSTFALVFGILMVIAHLSFA.

It belongs to the scoloptoxin-17 family. Post-translationally, contains 3 disulfide bonds. Expressed by the venom gland.

The protein resides in the secreted. The polypeptide is U-scoloptoxin(17)-Er3a (Ethmostigmus rubripes (Giant centipede)).